Here is a 425-residue protein sequence, read N- to C-terminus: Dual-specificity RNA methyltransferase RlmN (425 aa).

E136 acts as the Proton acceptor in catalysis. Positions 142-381 constitute a Radical SAM core domain; sequence GDDRGTLCVS…FTAGYASPVR (240 aa). An intrachain disulfide couples C149 to C392. Residues C156, C160, and C163 each coordinate [4Fe-4S] cluster. S-adenosyl-L-methionine is bound by residues 218 to 219, S250, 272 to 274, and N349; these read GE and SLH. C392 functions as the S-methylcysteine intermediate in the catalytic mechanism.

Belongs to the radical SAM superfamily. RlmN family. It depends on [4Fe-4S] cluster as a cofactor.

The protein resides in the cytoplasm. The enzyme catalyses adenosine(2503) in 23S rRNA + 2 reduced [2Fe-2S]-[ferredoxin] + 2 S-adenosyl-L-methionine = 2-methyladenosine(2503) in 23S rRNA + 5'-deoxyadenosine + L-methionine + 2 oxidized [2Fe-2S]-[ferredoxin] + S-adenosyl-L-homocysteine. The catalysed reaction is adenosine(37) in tRNA + 2 reduced [2Fe-2S]-[ferredoxin] + 2 S-adenosyl-L-methionine = 2-methyladenosine(37) in tRNA + 5'-deoxyadenosine + L-methionine + 2 oxidized [2Fe-2S]-[ferredoxin] + S-adenosyl-L-homocysteine. Specifically methylates position 2 of adenine 2503 in 23S rRNA and position 2 of adenine 37 in tRNAs. m2A2503 modification seems to play a crucial role in the proofreading step occurring at the peptidyl transferase center and thus would serve to optimize ribosomal fidelity. The protein is Dual-specificity RNA methyltransferase RlmN of Methylorubrum extorquens (strain PA1) (Methylobacterium extorquens).